A 542-amino-acid polypeptide reads, in one-letter code: Protein lin-9 homolog (542 aa).

A2 carries the N-acetylalanine modification. K21 is covalently cross-linked (Glycyl lysine isopeptide (Lys-Gly) (interchain with G-Cter in SUMO2)). S65 and S95 each carry phosphoserine. Residues T96 and T304 each carry the phosphothreonine modification. 2 positions are modified to phosphoserine: S309 and S321.

The protein belongs to the lin-9 family. Component of the DREAM complex (also named LINC complex) at least composed of E2F4, E2F5, LIN9, LIN37, LIN52, LIN54, MYBL1, MYBL2, RBL1, RBL2, RBBP4, TFDP1 and TFDP2. The complex exists in quiescent cells where it represses cell cycle-dependent genes. It dissociates in S phase when LIN9, LIN37, LIN52 and LIN54 form a subcomplex that binds to MYBL2. Interacts with RB1.

The protein resides in the nucleus. The protein localises to the nucleoplasm. Functionally, acts as a tumor suppressor. Inhibits DNA synthesis. Its ability to inhibit oncogenic transformation is mediated through its association with RB1. Plays a role in the expression of genes required for the G1/S transition. In Mus musculus (Mouse), this protein is Protein lin-9 homolog (Lin9).